The chain runs to 545 residues: MSRQSLTKAHAKITELSWEPTFATPATRFGTDYTFEKAPKKDPLKQIMRSYFPMEEEKDNRVYGAMDGAIRGNMFRQVQERWLEWQKLFLSIIPFPEISAARAMPMAIDAVPNPEIHNGLAVQMIDEVRHSTIQMNLKKLYMNNYIDPAGFDITEKAFANNYAGTIGRQFGEGFITGDAITAANIYLTVVAETAFTNTLFVAMPDEAAANGDYLLPTVFHSVQSDESRHISNGYSILLMALADERNRPLLERDLRYAWWNNHCVVDAAIGTFIEYGTKDRRKDRESYAEMWRRWIYDDYYRSYLLPLEKYGLTIPHDLVEEAWNRIVDKHYVHEVARFFATGWPVNYWRIDAMTDTDFEWFEEKYPGWYNKFGKWWENYNRLAYPGKNKPIAFEDVDYEYPHRCWTCMVPCLIREDMVTDKVDGQWRTYCSETCAWTDKVAFRPEYEGRPTPNMGRLTGFREWETLHHGKDLADIITDLGYVRDDGKTLIPQPHLDLDPKKMWTLDDVRGIPFGSPNVALNEMSDDEREAHIAAYMANKNGAVTV.

6 residues coordinate Fe cation: Glu97, Glu127, His130, Glu192, Glu226, and His229.

It belongs to the TmoA/XamoA family. As to quaternary structure, the propane 2-monooxygenase multicomponent enzyme system is composed of an electron transfer component and a monooxygenase component interacting with the effector protein PrmD. The electron transfer component is composed of a reductase (PrmB), and the monooxygenase component is formed by a large subunit (PrmA) and a small subunit (PrmC). Probably requires the presence of the chaperonin-like protein PrmG to ensure a productive folding, resulting of a soluble PrmA, which leads to the active form of PrmABCD. Fe(2+) is required as a cofactor.

The catalysed reaction is propane + NADH + O2 + H(+) = propan-2-ol + NAD(+) + H2O. The enzyme catalyses phenol + NADH + O2 + H(+) = hydroquinone + NAD(+) + H2O. In terms of biological role, component of the propane 2-monooxygenase multicomponent enzyme system which is involved in the degradation of propane via the O2-dependent hydroxylation of propane. Under acetone induction, also able to catalyze the oxidation of phenol to yield hydroquinone. In Gordonia sp. (strain TY-5), this protein is Propane 2-monooxygenase, hydroxylase component large subunit.